The following is a 397-amino-acid chain: Chorismate synthase (397 aa).

Residues R40 and R46 each contribute to the NADP(+) site. FMN-binding positions include 129-131, 257-258, G302, 317-321, and R343; these read RSS, QA, and KPISS.

It belongs to the chorismate synthase family. Homotetramer. The cofactor is FMNH2.

It carries out the reaction 5-O-(1-carboxyvinyl)-3-phosphoshikimate = chorismate + phosphate. It participates in metabolic intermediate biosynthesis; chorismate biosynthesis; chorismate from D-erythrose 4-phosphate and phosphoenolpyruvate: step 7/7. Its function is as follows. Catalyzes the anti-1,4-elimination of the C-3 phosphate and the C-6 proR hydrogen from 5-enolpyruvylshikimate-3-phosphate (EPSP) to yield chorismate, which is the branch point compound that serves as the starting substrate for the three terminal pathways of aromatic amino acid biosynthesis. This reaction introduces a second double bond into the aromatic ring system. The sequence is that of Chorismate synthase from Chlorobium phaeobacteroides (strain DSM 266 / SMG 266 / 2430).